Here is a 506-residue protein sequence, read N- to C-terminus: MSDVQEATNQLLDVNLCENQMSIQVTESGPRSESEHLQVTIGATVPTGFEQTAADEVREKLGSSCKISKDRGKIYFDITVDSLAQVHCLRSVDNLFVVVQEFKDYQFKETKEEVLKDFEELAGKLPWSDPLKIWKINTCFKKKKTKRRKLNPNSSKQKIDNGRGDTTVEKDVKKELTNSVSDSQISDYYENPAIKEQVSTLIGDGLTSCKDETEENSKEEADPEVLKFRVTCNRAGEKHCFSSNEAARDFGGAVQDYFKWKADMTNFDVEVLLNIHDNEVVVGIALTEESLHRRNITHFGPTTLRSTLAYGMLRLCAPQPTDIIVDPMCGTGAIPIEGATEWSNCYHIAGDNNPLAVNRAANNISSLLTKIQVKEGKLPLGLPIDTIQWDICNLPLRTGSVDIIVTDMPFGKRMGSKKRNWNLYPACLREMSRVCRPGTGRAVLLTQDKKCFAKALSGMGHLWRKVHTVWVNIGGLHAAVYLLKRTPQSFVHPSEEDGERCPCTQR.

A disordered region spans residues 144-172 (KTKRRKLNPNSSKQKIDNGRGDTTVEKDV). The span at 157 to 172 (QKIDNGRGDTTVEKDV) shows a compositional bias: basic and acidic residues. Positions 170–286 (KDVKKELTNS…DNEVVVGIAL (117 aa)) constitute a THUMP domain.

Belongs to the methyltransferase superfamily. In terms of assembly, part of the heterodimeric THUMPD3-TRM112 methyltransferase complex; this complex forms an active tRNA methyltransferase, where TRMT112 acts as an activator of the catalytic subunit THUMPD3.

The protein localises to the cytoplasm. The enzyme catalyses guanosine(6) in tRNA + S-adenosyl-L-methionine = N(2)-methylguanosine(6) in tRNA + S-adenosyl-L-homocysteine + H(+). The catalysed reaction is guanosine(7) in tRNA + S-adenosyl-L-methionine = N(2)-methylguanosine(7) in tRNA + S-adenosyl-L-homocysteine + H(+). In terms of biological role, catalytic subunit of the THUMPD3-TRM112 methyltransferase complex, that specifically mediates the S-adenosyl-L-methionine-dependent N(2)-methylation of guanosine nucleotide at position 6 (m2G6) in tRNAs. This is one of the major tRNA (guanine-N(2))-methyltransferases. Also catalyzes the S-adenosyl-L-methionine-dependent N(2)-methylation of guanosine nucleotide at position 7 of tRNA(Trp). The protein is tRNA (guanine(6)-N(2))-methyltransferase THUMP3 of Bos taurus (Bovine).